The sequence spans 98 residues: Small ribosomal subunit protein bS20 (98 aa).

Residues 1–12 show a composition bias toward basic residues; it reads MAPRKPSKKVGP. The interval 1–31 is disordered; that stretch reads MAPRKPSKKVGPQKRPSAEKRVITSKKKQLR.

The protein belongs to the bacterial ribosomal protein bS20 family.

Functionally, binds directly to 16S ribosomal RNA. The polypeptide is Small ribosomal subunit protein bS20 (Chlamydia trachomatis serovar A (strain ATCC VR-571B / DSM 19440 / HAR-13)).